The sequence spans 499 residues: FAD-dependent oxidoreductase domain-containing protein 1 (499 aa).

Residues Glu-75–Leu-95 traverse the membrane as a helical segment.

FAD serves as cofactor.

The protein resides in the mitochondrion inner membrane. In terms of biological role, required for the assembly of the mitochondrial membrane respiratory chain NADH dehydrogenase (Complex I). Involved in mid-late stages of complex I assembly. In Xenopus laevis (African clawed frog), this protein is FAD-dependent oxidoreductase domain-containing protein 1 (foxred1).